The chain runs to 201 residues: Thymidylate kinase (201 aa).

Gly7–Ser14 serves as a coordination point for ATP.

The protein belongs to the thymidylate kinase family.

It carries out the reaction dTMP + ATP = dTDP + ADP. In terms of biological role, phosphorylation of dTMP to form dTDP in both de novo and salvage pathways of dTTP synthesis. The sequence is that of Thymidylate kinase from Thermosipho africanus (strain TCF52B).